Consider the following 500-residue polypeptide: Probable malate:quinone oxidoreductase (500 aa).

This sequence belongs to the MQO family. FAD serves as cofactor.

It carries out the reaction (S)-malate + a quinone = a quinol + oxaloacetate. The protein operates within carbohydrate metabolism; tricarboxylic acid cycle; oxaloacetate from (S)-malate (quinone route): step 1/1. The sequence is that of Probable malate:quinone oxidoreductase from Bacillus mycoides (strain KBAB4) (Bacillus weihenstephanensis).